The primary structure comprises 332 residues: Leucine carboxyl methyltransferase 1 (332 aa).

Residues Arg71, Gly96, Asp120, 169–170 (DL), and Glu196 contribute to the S-adenosyl-L-methionine site.

This sequence belongs to the methyltransferase superfamily. LCMT family.

The catalysed reaction is [phosphatase 2A protein]-C-terminal L-leucine + S-adenosyl-L-methionine = [phosphatase 2A protein]-C-terminal L-leucine methyl ester + S-adenosyl-L-homocysteine. In terms of biological role, methylates the carboxyl group of the C-terminal leucine residue of protein phosphatase 2A catalytic subunits to form alpha-leucine ester residues. This chain is Leucine carboxyl methyltransferase 1 (Lcmt1), found in Rattus norvegicus (Rat).